The primary structure comprises 310 residues: Ribosomal RNA small subunit methyltransferase H (310 aa).

S-adenosyl-L-methionine is bound by residues 32-34, aspartate 51, phenylalanine 78, aspartate 99, and glutamine 106; that span reads AGH.

It belongs to the methyltransferase superfamily. RsmH family.

The protein resides in the cytoplasm. The enzyme catalyses cytidine(1402) in 16S rRNA + S-adenosyl-L-methionine = N(4)-methylcytidine(1402) in 16S rRNA + S-adenosyl-L-homocysteine + H(+). Its function is as follows. Specifically methylates the N4 position of cytidine in position 1402 (C1402) of 16S rRNA. The chain is Ribosomal RNA small subunit methyltransferase H from Macrococcus caseolyticus (strain JCSC5402) (Macrococcoides caseolyticum).